The primary structure comprises 143 residues: uncharacterized protein (143 aa).

This sequence belongs to the SufE family.

This is an uncharacterized protein from Mycobacterium tuberculosis (strain CDC 1551 / Oshkosh).